The sequence spans 126 residues: Small ribosomal subunit protein uS13 (126 aa).

The interval His91–Lys126 is disordered. The segment covering Gln100–Lys126 has biased composition (basic residues).

It belongs to the universal ribosomal protein uS13 family. As to quaternary structure, part of the 30S ribosomal subunit. Forms a loose heterodimer with protein S19. Forms two bridges to the 50S subunit in the 70S ribosome.

Functionally, located at the top of the head of the 30S subunit, it contacts several helices of the 16S rRNA. In the 70S ribosome it contacts the 23S rRNA (bridge B1a) and protein L5 of the 50S subunit (bridge B1b), connecting the 2 subunits; these bridges are implicated in subunit movement. Contacts the tRNAs in the A and P-sites. In Acaryochloris marina (strain MBIC 11017), this protein is Small ribosomal subunit protein uS13.